A 653-amino-acid chain; its full sequence is 4-hydroxy-2,2'-bipyrrole-5-methanol synthase PigH (653 aa).

The 78-residue stretch at 7 to 84 (ETYETLKQSV…DALDGILQRE (78 aa)) folds into the Carrier domain. Ser45 carries the O-(pantetheine 4'-phosphoryl)serine modification. 354 to 355 (GY) is a pyridoxal 5'-phosphate binding site. His379 serves as a coordination point for substrate. Ser426, His454, and Thr482 together coordinate pyridoxal 5'-phosphate. The residue at position 485 (Lys485) is an N6-(pyridoxal phosphate)lysine. The helical transmembrane segment at 512-532 (VFAATIPAPVAAGVIASIDVM) threads the bilayer.

The cofactor is pyridoxal 5'-phosphate.

It localises to the membrane. The protein operates within antibiotic biosynthesis; prodigiosin biosynthesis. Involved in the biosynthesis of 4-methoxy-2,2'-bipyrrole-5-carbaldehyde (MBC), one of the terminal products involved in the biosynthesis of the red antibiotic prodigiosin (Pig). Carrier of the L-malonyl group (malonyl-S-PigH), which is decarboxylated by PigJ to yield a C2 carbanion acetyl-S-PigH. Then the pyrrolyl group of pyrrolyl-S-cysteinyl PigJ intermediate is captured by the C2 carbanion acetyl-S-PigH to yield the pyrrolyl-beta-ketoacyl-S-PigH. In the last step, PigH catalyzes the decarboxylative condensation between the pyrrolyl-beta-ketoacyl (pyrrolyl-beta-ketoacyl-S-PigH) and L-serine to yield 4-hydroxy-2,2'-bipyrrole-5-methanol (HBM). The polypeptide is 4-hydroxy-2,2'-bipyrrole-5-methanol synthase PigH (Serratia sp. (strain ATCC 39006) (Prodigiosinella confusarubida)).